Consider the following 226-residue polypeptide: Glutathione peroxidase 3 (226 aa).

Positions 1–24 are cleaved as a signal peptide; sequence MARLLQASCLLSLLLAGFLPQSRG. Sec73 is an active-site residue. A non-standard amino acid (selenocysteine) is located at residue Sec73.

It belongs to the glutathione peroxidase family. As to quaternary structure, homotetramer. As to expression, secreted in plasma.

It is found in the secreted. It catalyses the reaction 2 glutathione + H2O2 = glutathione disulfide + 2 H2O. The catalysed reaction is tert-butyl hydroperoxide + 2 glutathione = tert-butanol + glutathione disulfide + H2O. Its function is as follows. Protects cells and enzymes from oxidative damage, by catalyzing the reduction of hydrogen peroxide, lipid peroxides and organic hydroperoxide, by glutathione. This Sapajus apella (Brown-capped capuchin) protein is Glutathione peroxidase 3.